A 410-amino-acid polypeptide reads, in one-letter code: Chorismate synthase (410 aa).

NADP(+) is bound by residues Arg43 and Arg49. FMN-binding positions include Arg143–Ser145, Gln264–Ala265, Gly308, Lys323–Thr327, and Arg349.

Belongs to the chorismate synthase family. In terms of assembly, homotetramer. FMNH2 is required as a cofactor.

The enzyme catalyses 5-O-(1-carboxyvinyl)-3-phosphoshikimate = chorismate + phosphate. The protein operates within metabolic intermediate biosynthesis; chorismate biosynthesis; chorismate from D-erythrose 4-phosphate and phosphoenolpyruvate: step 7/7. Catalyzes the anti-1,4-elimination of the C-3 phosphate and the C-6 proR hydrogen from 5-enolpyruvylshikimate-3-phosphate (EPSP) to yield chorismate, which is the branch point compound that serves as the starting substrate for the three terminal pathways of aromatic amino acid biosynthesis. This reaction introduces a second double bond into the aromatic ring system. This Corynebacterium glutamicum (strain ATCC 13032 / DSM 20300 / JCM 1318 / BCRC 11384 / CCUG 27702 / LMG 3730 / NBRC 12168 / NCIMB 10025 / NRRL B-2784 / 534) protein is Chorismate synthase.